The primary structure comprises 209 residues: Pyroglutamyl-peptidase 1 (209 aa).

Residues E85, C149, and H168 contribute to the active site.

It belongs to the peptidase C15 family. As to quaternary structure, monomer.

It localises to the cytoplasm. The enzyme catalyses Release of an N-terminal pyroglutamyl group from a polypeptide, the second amino acid generally not being Pro.. Functionally, removes 5-oxoproline from various penultimate amino acid residues except L-proline. The polypeptide is Pyroglutamyl-peptidase 1 (Pgpep1) (Mus musculus (Mouse)).